We begin with the raw amino-acid sequence, 203 residues long: Pectinesterase inhibitor 12 (203 aa).

The signal sequence occupies residues 1–26 (MRMSKALAAVVAISVSLSAAAMGVDA). 2 disulfides stabilise this stretch: Cys32-Cys47 and Cys100-Cys140.

It belongs to the PMEI family.

The protein localises to the secreted. It localises to the extracellular space. It is found in the apoplast. Functionally, pectin methylesterase (PME) inhibitor that inhibits PME in vitro. The polypeptide is Pectinesterase inhibitor 12 (Oryza sativa subsp. japonica (Rice)).